Consider the following 100-residue polypeptide: NADH-quinone oxidoreductase subunit K (100 aa).

3 helical membrane passes run 4 to 24 (VTWY…GVLL), 29 to 49 (LIVM…FLAF), and 61 to 81 (IAFF…AVVI).

It belongs to the complex I subunit 4L family. As to quaternary structure, NDH-1 is composed of 14 different subunits. Subunits NuoA, H, J, K, L, M, N constitute the membrane sector of the complex.

It localises to the cell inner membrane. It carries out the reaction a quinone + NADH + 5 H(+)(in) = a quinol + NAD(+) + 4 H(+)(out). Functionally, NDH-1 shuttles electrons from NADH, via FMN and iron-sulfur (Fe-S) centers, to quinones in the respiratory chain. The immediate electron acceptor for the enzyme in this species is believed to be ubiquinone. Couples the redox reaction to proton translocation (for every two electrons transferred, four hydrogen ions are translocated across the cytoplasmic membrane), and thus conserves the redox energy in a proton gradient. This chain is NADH-quinone oxidoreductase subunit K, found in Anaeromyxobacter sp. (strain Fw109-5).